Reading from the N-terminus, the 1218-residue chain is Coatomer subunit alpha-2 (1218 aa).

WD repeat units lie at residues 7–48 (TKSN…DRFD), 49–88 (EHDG…CLFT), 91–132 (GHLD…AVLT), 133–172 (GHNH…KKSV), 202–241 (GHDR…AWEV), 246–285 (GHMN…GIQT), 288–326 (REHD…PAFS), and 363–404 (SLNQ…AGRA). Residues 855–876 (MANGGDGFDAEEGEANEEDGEE) are disordered. Residues 862–876 (FDAEEGEANEEDGEE) show a composition bias toward acidic residues.

As to quaternary structure, oligomeric complex that consists of at least the alpha, beta, beta', gamma, delta, epsilon and zeta subunits.

It localises to the cytoplasm. The protein resides in the golgi apparatus membrane. It is found in the cytoplasmic vesicle. Its subcellular location is the COPI-coated vesicle membrane. The coatomer is a cytosolic protein complex that binds to dilysine motifs and reversibly associates with Golgi non-clathrin-coated vesicles, which further mediate biosynthetic protein transport from the ER, via the Golgi up to the trans Golgi network. Coatomer complex is required for budding from Golgi membranes, and is essential for the retrograde Golgi-to-ER transport of dilysine-tagged proteins. This chain is Coatomer subunit alpha-2, found in Oryza sativa subsp. japonica (Rice).